A 150-amino-acid chain; its full sequence is Transmembrane protein PMIS2 (150 aa).

The span at methionine 1–alanine 12 shows a compositional bias: low complexity. Residues methionine 1–glutamate 61 form a disordered region. Positions proline 13–proline 22 are enriched in pro residues. Low complexity predominate over residues proline 23 to glutamate 61. Transmembrane regions (helical) follow at residues leucine 71–phenylalanine 91 and glycine 130–tyrosine 150.

It belongs to the CD225/Dispanin family.

Its subcellular location is the membrane. Functionally, may play a role in spermatozoa mobility. The protein is Transmembrane protein PMIS2 of Homo sapiens (Human).